The following is a 219-amino-acid chain: Ras-related protein RABA5d (219 aa).

S2 is subject to N-acetylserine. 19 to 26 (GDSAVGKS) provides a ligand contact to GTP. The short motif at 41–49 (SKATIGVEF) is the Effector region element. GTP contacts are provided by residues 67 to 71 (DTAGQ), 125 to 128 (NKCD), and 155 to 156 (SA). Residues C215 and C216 are each lipidated (S-geranylgeranyl cysteine).

It belongs to the small GTPase superfamily. Rab family.

Its subcellular location is the cell membrane. Functionally, intracellular vesicle trafficking and protein transport. This Arabidopsis thaliana (Mouse-ear cress) protein is Ras-related protein RABA5d (RABA5D).